Reading from the N-terminus, the 475-residue chain is Probable dolichyl pyrophosphate Man9GlcNAc2 alpha-1,3-glucosyltransferase (475 aa).

8 consecutive transmembrane segments (helical) span residues 114-133 (VVSA…AYSL), 161-181 (GHFQ…AAIL), 235-255 (AVVL…LQAV), 296-316 (MALV…VLLF), 322-342 (VGFL…SFQV), 385-405 (LLVP…CFDS), 418-438 (IANI…TVPA), and 441-461 (KYPD…FFLF).

The protein belongs to the ALG6/ALG8 glucosyltransferase family.

The protein localises to the endoplasmic reticulum membrane. The catalysed reaction is an alpha-D-Man-(1-&gt;2)-alpha-D-Man-(1-&gt;2)-alpha-D-Man-(1-&gt;3)-[alpha-D-Man-(1-&gt;2)-alpha-D-Man-(1-&gt;3)-[alpha-D-Man-(1-&gt;2)-alpha-D-Man-(1-&gt;6)]-alpha-D-Man-(1-&gt;6)]-beta-D-Man-(1-&gt;4)-beta-D-GlcNAc-(1-&gt;4)-alpha-D-GlcNAc-diphospho-di-trans,poly-cis-dolichol + a di-trans,poly-cis-dolichyl beta-D-glucosyl phosphate = an alpha-D-Glc-(1-&gt;3)-alpha-D-Man-(1-&gt;2)-alpha-D-Man-(1-&gt;2)-alpha-D-Man-(1-&gt;3)-[alpha-D-Man-(1-&gt;2)-alpha-D-Man-(1-&gt;3)-[alpha-D-Man-(1-&gt;2)-alpha-D-Man-(1-&gt;6)]-alpha-D-Man-(1-&gt;6)]-beta-D-Man-(1-&gt;4)-beta-D-GlcNAc-(1-&gt;4)-alpha-D-GlcNAc-diphospho-di-trans,poly-cis-dolichol + a di-trans,poly-cis-dolichyl phosphate + H(+). It participates in protein modification; protein glycosylation. Its function is as follows. Adds the first glucose residue to the lipid-linked oligosaccharide precursor for N-linked glycosylation. Transfers glucose from dolichyl phosphate glucose (Dol-P-Glc) onto the lipid-linked oligosaccharide Man(9)GlcNAc(2)-PP-Dol. Involved in cuticle differentiation. In Drosophila melanogaster (Fruit fly), this protein is Probable dolichyl pyrophosphate Man9GlcNAc2 alpha-1,3-glucosyltransferase (gny).